We begin with the raw amino-acid sequence, 1782 residues long: AF4/FMR2 family member lilli (1782 aa).

Disordered stretches follow at residues 42 to 84 (NMED…PSEG), 150 to 313 (ASSS…PPPE), 434 to 515 (MPTP…QQQQ), 605 to 637 (GGSS…NLSR), 691 to 732 (EKLH…QQRY), 768 to 820 (GALP…LQIP), 839 to 891 (KVQP…SNKK), 911 to 1064 (VAAA…AAAS), 1091 to 1126 (AGNS…QHKQ), 1166 to 1234 (LPQS…KQGQ), 1296 to 1327 (ARQH…TPKD), 1386 to 1420 (LKQE…EQLS), 1450 to 1484 (QESA…QQQQ), and 1674 to 1701 (GNTP…GKIV). The span at 54-80 (REKYERQQGIQSDDRETSLFGEPRRLN) shows a compositional bias: basic and acidic residues. 2 stretches are compositionally biased toward low complexity: residues 164–180 (QQQQ…QQQQ) and 211–260 (PSSS…MSSP). Residues 435 to 447 (PTPPKASPTPPAI) are compositionally biased toward pro residues. Phosphothreonine is present on Thr-443. Residues 450–463 (MKTEKNHSLEKQDS) are compositionally biased toward basic and acidic residues. Residues 465-475 (LENDLELSESD) show a composition bias toward acidic residues. Phosphoserine occurs at positions 472 and 474. Low complexity-rich tracts occupy residues 484–515 (SAGN…QQQQ) and 609–622 (GSCM…SSSN). A compositionally biased stretch (polar residues) spans 623 to 634 (KTPSPTDSNRWN). A compositionally biased stretch (basic and acidic residues) spans 691–701 (EKLHDEPRHVG). Low complexity-rich tracts occupy residues 714–730 (QQQQ…QQQQ) and 782–805 (SDSG…GGSS). Basic residues predominate over residues 859–869 (PRQKKPRKKKM). Phosphoserine is present on residues Ser-878 and Ser-879. The segment at residues 920–932 (KKGRGRPRKQAQQ) is a DNA-binding region (a.T hook). Residues 929 to 972 (QAQQQQQQQQQQLQQSGNLSSASASSSQAKGPTLTAAKKPLAKA) are compositionally biased toward low complexity. Phosphoserine is present on residues Ser-949 and Ser-951. A compositionally biased stretch (polar residues) spans 973-982 (SVSNSNSTAP). Low complexity-rich tracts occupy residues 996 to 1018 (SNSS…TMAA), 1033 to 1064 (SSSS…AAAS), 1105 to 1116 (SVGSSSNSSSSS), and 1174 to 1196 (SSSD…SSSS). The span at 1308 to 1318 (AQQNGHLSSRS) shows a compositional bias: polar residues. Residues 1450 to 1460 (QESAANGSPNK) show a composition bias toward polar residues. Residue Ser-1457 is modified to Phosphoserine. 2 stretches are compositionally biased toward low complexity: residues 1461 to 1484 (LQQQ…QQQQ) and 1674 to 1694 (GNTP…SGSN).

This sequence belongs to the AF4 family.

It is found in the nucleus. Functionally, has a role in transcriptional regulation. Acts in parallel with the Ras/MAPK and the PI3K/PKB pathways in the control of cell identity and cellular growth. Essential for regulation of the cytoskeleton and cell growth but not for cell proliferation or growth rate. Required specifically for the microtubule-based basal transport of lipid droplets. Plays a partially redundant function downstream of Raf in cell fate specification in the developing eye. Pair-rule protein that regulates embryonic cellularization, gastrulation and segmentation. This chain is AF4/FMR2 family member lilli, found in Drosophila mojavensis (Fruit fly).